Here is a 385-residue protein sequence, read N- to C-terminus: Acetate kinase (385 aa).

Residue Asn-9 participates in Mg(2+) binding. Lys-16 lines the ATP pocket. Residue Arg-87 participates in substrate binding. Asp-144 functions as the Proton donor/acceptor in the catalytic mechanism. ATP contacts are provided by residues 202–206 (HLGSG) and 277–279 (DMR). Residue Glu-373 coordinates Mg(2+).

The protein belongs to the acetokinase family. As to quaternary structure, homodimer. Mg(2+) is required as a cofactor. It depends on Mn(2+) as a cofactor.

The protein resides in the cytoplasm. The catalysed reaction is acetate + ATP = acetyl phosphate + ADP. Its pathway is metabolic intermediate biosynthesis; acetyl-CoA biosynthesis; acetyl-CoA from acetate: step 1/2. Functionally, catalyzes the formation of acetyl phosphate from acetate and ATP. Can also catalyze the reverse reaction. This chain is Acetate kinase, found in Rickettsia typhi (strain ATCC VR-144 / Wilmington).